The sequence spans 426 residues: MKLQKPKGTQDILPVAAAKWQYVEDVARETFKQYHYGEIRTPMFEHYEVISRSVGDTTDIVTKEMYDFYDKGDRHITLRPEGTAPVVRSYVENKLFAPEVQKPVKLYYIGSMFRYERPQVGRSREFHQIGVECFGSANPATDVETIAMAYHLFERLGIKGVTLHLNSLGNAASRAAYRQALIDYLSPMRETLSKDSQRRLDENPLRVLDSKEKEDKIAVANAPSILDYLDEDSQAHFDAVRSMLEALAIPYVIDTNMVRGLDYYNHTIFEFITEVNQSELTICAGGRYDGLVEYFGGPATPGFGFGLGLERLLLILDKQGVELPVEEGLDVYIAVLGADANVAALALTQAIRRQGFTVERDYLGRKIKAQFKSADTFKAKVVITLGESEIKAGQAVLKHNQTRQEMTVSFDQIQTDFASIFAECVQ.

The protein belongs to the class-II aminoacyl-tRNA synthetase family. As to quaternary structure, homodimer.

Its subcellular location is the cytoplasm. The catalysed reaction is tRNA(His) + L-histidine + ATP = L-histidyl-tRNA(His) + AMP + diphosphate + H(+). This chain is Histidine--tRNA ligase, found in Streptococcus equi subsp. zooepidemicus (strain H70).